The chain runs to 207 residues: Outer-membrane lipoprotein carrier protein (207 aa).

The signal sequence occupies residues 1 to 21; sequence MRLIRMLLLPVLAVTTLSAHA.

It belongs to the LolA family. Monomer.

It is found in the periplasm. Functionally, participates in the translocation of lipoproteins from the inner membrane to the outer membrane. Only forms a complex with a lipoprotein if the residue after the N-terminal Cys is not an aspartate (The Asp acts as a targeting signal to indicate that the lipoprotein should stay in the inner membrane). This is Outer-membrane lipoprotein carrier protein from Pseudomonas fluorescens (strain ATCC BAA-477 / NRRL B-23932 / Pf-5).